Here is a 609-residue protein sequence, read N- to C-terminus: All-trans-retinol 13,14-reductase (609 aa).

The first 21 residues, 1-21, serve as a signal peptide directing secretion; that stretch reads MWITALLLVVLLLVVVHRVYV.

Belongs to the carotenoid/retinoid oxidoreductase family. CrtISO subfamily. NAD(+) is required as a cofactor. NADP(+) serves as cofactor. It depends on FAD as a cofactor. In terms of tissue distribution, highly expressed in liver, kidney and heart.

The protein localises to the endoplasmic reticulum membrane. The enzyme catalyses all-trans-13,14-dihydroretinol + A = all-trans-retinol + AH2. Its function is as follows. Catalyzes the saturation of all-trans-retinol to all-trans-13,14-dihydroretinol. Does not exhibit any activity toward all-trans-retinoic acid, nor 9-cis, 11-cis or 13-cis-retinol isomers. May play a role in the metabolism of vitamin A. Independently of retinol conversion, may regulate liver metabolism upstream of MLXIPL/ChREBP. May play a role in adipocyte differentiation. The chain is All-trans-retinol 13,14-reductase (Retsat) from Rattus norvegicus (Rat).